The chain runs to 302 residues: MEFSTSSFIFDDDTPPKCPLATKASFIFSVYIIIGLIISYLLQIFRIVRLGSSQGLSFSYLILGYIGVLNAFSNVIALQISPLTECCQNYYSKKQCFANTTGLIQVGSQVLIMGCVLMAFWMFLPRPIHFVAADDENGLPIPEPLSVTKSRKWRKASYGLLGVFTWGLFIICLSATVLSSNFAWAAFLGFSASFCAVVQYVPQIIKTIRHQSHGALSIPMMMMQTPGGFLIGYLLSRLPGTNWTTYMMYIVSACLQGLLLMLCMFYLHKEKSRRKREELQATLQEEESQRAVRILEAETGPE.

7 helical membrane-spanning segments follow: residues Ser-25–Phe-45, Phe-58–Leu-78, Ile-104–Leu-124, Tyr-158–Leu-178, Phe-182–Pro-202, Ala-215–Leu-235, and Met-247–Leu-267. A PQ-loop domain is found at Ala-175–Thr-245.

The protein resides in the membrane. This is an uncharacterized protein from Schizosaccharomyces pombe (strain 972 / ATCC 24843) (Fission yeast).